The chain runs to 141 residues: Putative pre-16S rRNA nuclease (141 aa).

Belongs to the YqgF nuclease family.

It localises to the cytoplasm. Could be a nuclease involved in processing of the 5'-end of pre-16S rRNA. This is Putative pre-16S rRNA nuclease from Sodalis glossinidius (strain morsitans).